Here is a 348-residue protein sequence, read N- to C-terminus: Mamu class I histocompatibility antigen, alpha chain F (348 aa).

A signal peptide spans 1-21; it reads MAPRTLLLVLSGALALTETWA. Positions 22–113 are alpha-1; it reads GSHSLRYFST…LLLRYNQSEA (92 aa). Residues 22-307 lie on the Extracellular side of the membrane; that stretch reads GSHSLRYFST…ESSSQPTIPI (286 aa). N-linked (GlcNAc...) asparagine glycosylation occurs at N109. The interval 114–205 is alpha-2; the sequence is GSHTLQGMNG…ENGKETLQRA (92 aa). 2 disulfides stabilise this stretch: C124-C187 and C226-C282. The alpha-3 stretch occupies residues 206–297; the sequence is DPPKAHVAHH…GLPQPLTLRW (92 aa). Residues 208–296 enclose the Ig-like C1-type domain; it reads PKAHVAHHPI…EGLPQPLTLR (89 aa). Residues 298–307 form a connecting peptide region; that stretch reads ESSSQPTIPI. The chain crosses the membrane as a helical span at residues 308-331; the sequence is VGIVAGLAVLAVVVTGAVVAAVMW. The Cytoplasmic segment spans residues 332–348; sequence RRKSSDRNRGSYSQPTM.

The protein belongs to the MHC class I family. In terms of assembly, heterodimer of an alpha chain and a beta chain (beta-2-microglobulin).

The protein localises to the membrane. Its function is as follows. Involved in the presentation of foreign antigens to the immune system. The sequence is that of Mamu class I histocompatibility antigen, alpha chain F (Mamu-F) from Macaca mulatta (Rhesus macaque).